The chain runs to 236 residues: UPF0173 metal-dependent hydrolase AZC_2841 (236 aa).

The protein belongs to the UPF0173 family.

The protein is UPF0173 metal-dependent hydrolase AZC_2841 of Azorhizobium caulinodans (strain ATCC 43989 / DSM 5975 / JCM 20966 / LMG 6465 / NBRC 14845 / NCIMB 13405 / ORS 571).